A 189-amino-acid chain; its full sequence is Interferon alpha-1 (189 aa).

Residues Met-1–Gly-23 form the signal peptide. 2 cysteine pairs are disulfide-bonded: Cys-24–Cys-122 and Cys-52–Cys-162.

The protein belongs to the alpha/beta interferon family. Interacts with CR2.

Its subcellular location is the secreted. Its function is as follows. Produced by macrophages, IFN-alpha have antiviral activities. Interferon stimulates the production of two enzymes: a protein kinase and an oligoadenylate synthetase. The sequence is that of Interferon alpha-1 from Bos taurus (Bovine).